Reading from the N-terminus, the 120-residue chain is Large ribosomal subunit protein bL19 (120 aa).

This sequence belongs to the bacterial ribosomal protein bL19 family.

In terms of biological role, this protein is located at the 30S-50S ribosomal subunit interface and may play a role in the structure and function of the aminoacyl-tRNA binding site. The sequence is that of Large ribosomal subunit protein bL19 from Gloeothece citriformis (strain PCC 7424) (Cyanothece sp. (strain PCC 7424)).